Here is a 255-residue protein sequence, read N- to C-terminus: uncharacterized protein (255 aa).

This is an uncharacterized protein from Bacillus subtilis (strain 168).